The sequence spans 407 residues: TOM1-like protein 1 (407 aa).

Residue Gly2 is modified to N-acetylglycine. The 129-residue stretch at 55 to 183 (ATTENLEEPD…SLKARGIRFP (129 aa)) folds into the VHS domain. The region spanning 228-315 (FTAEQTKEAF…TLSKYEEMNK (88 aa)) is the GAT domain. The tract at residues 315-407 (KPSAPLTSHE…SSKNDDLIRF (93 aa)) is disordered. At Ser337 the chain carries Phosphoserine. Residues 337–347 (SPIHGREESLV) are compositionally biased toward basic and acidic residues. Residues 353 to 364 (VRGGFHGGGGSG) show a composition bias toward gly residues. A compositionally biased stretch (basic and acidic residues) spans 388 to 407 (PDHDPKKEQSSSKNDDLIRF).

The protein belongs to the TOM1 family. In terms of tissue distribution, ubiquitously expressed.

The protein localises to the membrane. Might contribute to the loading of the ESCRT machinery. In Arabidopsis thaliana (Mouse-ear cress), this protein is TOM1-like protein 1.